The primary structure comprises 460 residues: A-type ATP synthase subunit B (460 aa).

The protein belongs to the ATPase alpha/beta chains family. As to quaternary structure, has multiple subunits with at least A(3), B(3), C, D, E, F, H, I and proteolipid K(x).

The protein resides in the cell membrane. Its function is as follows. Component of the A-type ATP synthase that produces ATP from ADP in the presence of a proton gradient across the membrane. The B chain is a regulatory subunit. The chain is A-type ATP synthase subunit B from Thermoplasma acidophilum (strain ATCC 25905 / DSM 1728 / JCM 9062 / NBRC 15155 / AMRC-C165).